The primary structure comprises 117 residues: Immunoglobulin lambda variable 6-57 (117 aa).

The N-terminal stretch at 1–19 (MAWAPLLLTLLAHCTGSWA) is a signal peptide. The segment at 20-44 (NFMLTQPHSVSESPGKTVTISCTGS) is framework-1. The Ig-like domain occupies 20–117 (NFMLTQPHSV…YYCQSYDSSN (98 aa)). Residues Cys-41 and Cys-110 are joined by a disulfide bond. The segment at 45–52 (SGSIASNY) is complementarity-determining-1. Residues 53 to 69 (VQWYQQRPGSAPTTVIY) form a framework-2 region. Residues 65–97 (TTVIYEDNQRPSGVPDRFSGSIDSSSNSASLTI) are disordered. Positions 70-72 (EDN) are complementarity-determining-2. The framework-3 stretch occupies residues 73–110 (QRPSGVPDRFSGSIDSSSNSASLTISGLKTEDEADYYC). Residues 83–97 (SGSIDSSSNSASLTI) are compositionally biased toward low complexity. Residues 111 to 117 (QSYDSSN) are complementarity-determining-3.

In terms of assembly, immunoglobulins are composed of two identical heavy chains and two identical light chains; disulfide-linked.

Its subcellular location is the secreted. The protein resides in the cell membrane. Functionally, v region of the variable domain of immunoglobulin light chains that participates in the antigen recognition. Immunoglobulins, also known as antibodies, are membrane-bound or secreted glycoproteins produced by B lymphocytes. In the recognition phase of humoral immunity, the membrane-bound immunoglobulins serve as receptors which, upon binding of a specific antigen, trigger the clonal expansion and differentiation of B lymphocytes into immunoglobulins-secreting plasma cells. Secreted immunoglobulins mediate the effector phase of humoral immunity, which results in the elimination of bound antigens. The antigen binding site is formed by the variable domain of one heavy chain, together with that of its associated light chain. Thus, each immunoglobulin has two antigen binding sites with remarkable affinity for a particular antigen. The variable domains are assembled by a process called V-(D)-J rearrangement and can then be subjected to somatic hypermutations which, after exposure to antigen and selection, allow affinity maturation for a particular antigen. The polypeptide is Immunoglobulin lambda variable 6-57 (Homo sapiens (Human)).